Here is a 1226-residue protein sequence, read N- to C-terminus: Methionine synthase (1226 aa).

Positions Arg-6 to Val-326 constitute a Hcy-binding domain. Residues Cys-248, Cys-311, and Cys-312 each coordinate Zn(2+). The Pterin-binding domain occupies Phe-357 to Glu-618. Residues Ser-651 to Thr-745 enclose the B12-binding N-terminal domain. Methylcob(III)alamin is bound by residues Glu-695, Gly-757–Asp-761, His-760, Ser-805, Thr-809, and Ala-861. The region spanning Asn-747–Glu-882 is the B12-binding domain. Residues Lys-898 to Ala-1226 enclose the AdoMet activation domain. Residues Asp-948, Arg-1136, and Tyr-1191–Phe-1192 contribute to the S-adenosyl-L-methionine site.

This sequence belongs to the vitamin-B12 dependent methionine synthase family. Methylcob(III)alamin is required as a cofactor. Zn(2+) serves as cofactor.

It catalyses the reaction (6S)-5-methyl-5,6,7,8-tetrahydrofolate + L-homocysteine = (6S)-5,6,7,8-tetrahydrofolate + L-methionine. The protein operates within amino-acid biosynthesis; L-methionine biosynthesis via de novo pathway; L-methionine from L-homocysteine (MetH route): step 1/1. Functionally, catalyzes the transfer of a methyl group from methyl-cobalamin to homocysteine, yielding enzyme-bound cob(I)alamin and methionine. Subsequently, remethylates the cofactor using methyltetrahydrofolate. The protein is Methionine synthase (metH) of Vibrio cholerae serotype O1 (strain ATCC 39315 / El Tor Inaba N16961).